Reading from the N-terminus, the 367-residue chain is Quinolinate synthase (367 aa).

Iminosuccinate is bound by residues His-45 and Ser-62. Cys-109 contributes to the [4Fe-4S] cluster binding site. Iminosuccinate-binding positions include 140–142 and Ser-161; that span reads YVN. Cys-229 contributes to the [4Fe-4S] cluster binding site. Iminosuccinate-binding positions include 255–257 and Thr-272; that span reads HPE. Residue Cys-319 coordinates [4Fe-4S] cluster.

This sequence belongs to the quinolinate synthase family. Type 3 subfamily. It depends on [4Fe-4S] cluster as a cofactor.

The protein localises to the cytoplasm. It catalyses the reaction iminosuccinate + dihydroxyacetone phosphate = quinolinate + phosphate + 2 H2O + H(+). The protein operates within cofactor biosynthesis; NAD(+) biosynthesis; quinolinate from iminoaspartate: step 1/1. Functionally, catalyzes the condensation of iminoaspartate with dihydroxyacetone phosphate to form quinolinate. The chain is Quinolinate synthase from Anoxybacillus flavithermus (strain DSM 21510 / WK1).